We begin with the raw amino-acid sequence, 334 residues long: Methionine adenosyltransferase 2 subunit beta (334 aa).

Residues 37–40 (TGLL), 60–62 (FRR), 71–72 (NL), Cys-93, Arg-97, Tyr-159, and Leu-185 contribute to the NADP(+) site. At Thr-309 the chain carries Phosphothreonine. The tract at residues 319-334 (LWPFLIDKRWRQTVFH) is required for interaction with MAT2A.

It belongs to the dTDP-4-dehydrorhamnose reductase family. MAT2B subfamily. Heterotrimer; composed of a catalytic MAT2A homodimer that binds one regulatory MAT2B chain. Heterohexamer; composed of a central, catalytic MAT2A homotetramer flanked on either side by a regulatory MAT2B chain. NADP binding increases the affinity for MAT2A.

Its pathway is amino-acid biosynthesis; S-adenosyl-L-methionine biosynthesis; S-adenosyl-L-methionine from L-methionine: step 1/1. Functionally, regulatory subunit of S-adenosylmethionine synthetase 2, an enzyme that catalyzes the formation of S-adenosylmethionine from methionine and ATP. Regulates MAT2A catalytic activity by changing its kinetic properties, increasing its affinity for L-methionine. Can bind NADP (in vitro). The sequence is that of Methionine adenosyltransferase 2 subunit beta (MAT2B) from Pongo abelii (Sumatran orangutan).